An 888-amino-acid chain; its full sequence is Extra-large guanine nucleotide-binding protein 1 (888 aa).

The disordered stretch occupies residues 98 to 119; that stretch reads SVIEHTEEEEEEEGGDGEDCEL. Residues 103–118 are compositionally biased toward acidic residues; sequence TEEEEEEEGGDGEDCE. Residues 205-222 carry the Nuclear localization signal motif; sequence RRVRVVPVKKQPQTKGKK. The segment at 225–268 adopts an RING-type; degenerate zinc-finger fold; that stretch reads CYRCFKGSRFTEKEVCLVCDAKYCNSCVLRAMGSMPEGRKCVTC. The 398-residue stretch at 482–879 folds into the G-alpha domain; sequence TLQKILLVGN…NICMSEYSMY (398 aa). Positions 485–498 are G1 motif; it reads KILLVGNSGSGTST. GTP contacts are provided by residues 490–498 and 661–669; these read GNSGSGTST and DILYAEGVT. 2 residues coordinate Ca(2+): Ser497 and Thr669. A G2 motif region spans residues 661–669; sequence DILYAEGVT. The G3 motif stretch occupies residues 702-711; the sequence is YQLIRVPSRG. Residues 770–777 form a G4 motif region; the sequence is LLILNKYD. 774-777 contacts GTP; the sequence is NKYD. Residues 843-848 form a G5 motif region; it reads SKSLDP.

The protein belongs to the G-alpha family. XLG subfamily. Ca(2+) is required as a cofactor. As to expression, ubiquitous. Strongly expressed in vascular tissues, root and shoot meristems and lateral root primordia.

The protein localises to the nucleus. In terms of biological role, guanine nucleotide-binding proteins (G proteins) are involved as modulators or transducers in various transmembrane signaling systems. Binds GTP with specificity. Plays a role in the root morphogenesis by regulation of the cell proliferation. The polypeptide is Extra-large guanine nucleotide-binding protein 1 (XLG1) (Arabidopsis thaliana (Mouse-ear cress)).